The primary structure comprises 322 residues: Transaldolase (322 aa).

The active-site Schiff-base intermediate with substrate is lysine 136.

The protein belongs to the transaldolase family. Type 1 subfamily. Homodimer.

It localises to the cytoplasm. The enzyme catalyses D-sedoheptulose 7-phosphate + D-glyceraldehyde 3-phosphate = D-erythrose 4-phosphate + beta-D-fructose 6-phosphate. Its pathway is carbohydrate degradation; pentose phosphate pathway; D-glyceraldehyde 3-phosphate and beta-D-fructose 6-phosphate from D-ribose 5-phosphate and D-xylulose 5-phosphate (non-oxidative stage): step 2/3. Functionally, transaldolase is important for the balance of metabolites in the pentose-phosphate pathway. This Xanthomonas campestris pv. campestris (strain B100) protein is Transaldolase.